A 325-amino-acid polypeptide reads, in one-letter code: MQYYQMMKALRMLKKPKPGCLGIEIQSVPIPQPKNGELLVKIEAAAINPSDLMNATGGFPYTVYPRIVGRDYAGTVISGASHLVGTRVFGTSGSELSFTKDGTHAEYCIIPEKAAVRMPSNLSFTEAASVGVPFTTAYLALSRGETKGSDIVLVVGALGAVGSAVCQIAEDWGCKVITVSRSGSTDINTVVDPELKRVHELVEKVDVVIDTVGDPLLMKSALNQLGIGGRLSYISAPKQGSIEFSYDMKQIYRKNLKIIGCNSLLLSLVESNSLLKNMVAKFEAGKYKVLNKKIAETSLTDECINSYRKLMNECSTKFVITMSTN.

It belongs to the zinc-containing alcohol dehydrogenase family. Quinone oxidoreductase subfamily.

It is found in the cytoplasm. The protein localises to the nucleus. The chain is Zinc-type alcohol dehydrogenase-like protein C337.11 from Schizosaccharomyces pombe (strain 972 / ATCC 24843) (Fission yeast).